The following is a 475-amino-acid chain: Gamma-aminobutyric acid receptor subunit gamma-2 (475 aa).

Residues 1–39 form the signal peptide; sequence MSSPNIWSTGSSVYSTPVFSQKMTVWILLLLSLYPGFTS. Over 40–275 the chain is Extracellular; the sequence is QKSDDDYEDY…FDLSRRMGYF (236 aa). Residues asparagine 52 and asparagine 129 are each glycosylated (N-linked (GlcNAc...) asparagine). Cysteine 190 and cysteine 204 are oxidised to a cystine. Asparagine 247 is a glycosylation site (N-linked (GlcNAc...) asparagine). A helical transmembrane segment spans residues 276-296; the sequence is TIQTYIPCTLIVVLSWVSFWI. The Cytoplasmic segment spans residues 297–302; sequence NKDAVP. Residues 303 to 322 form a helical membrane-spanning segment; it reads ARTSLGITTVLTMTTLSTIA. At 323 to 334 the chain is on the extracellular side; the sequence is RKSLPKVSYVTA. A helical transmembrane segment spans residues 335–359; sequence MDLFVSVCFIFVFSALVEYGTLHYF. Over 360 to 451 the chain is Cytoplasmic; sequence VSNRKPSKDK…IHIRIAKMDS (92 aa). The interaction with GABARAP stretch occupies residues 433–450; sequence RTGAWRHGRIHIRIAKMD. The helical transmembrane segment at 452–472 threads the bilayer; that stretch reads YARIFFPTAFCLFNLVYWVSY. The Extracellular segment spans residues 473–475; it reads LYL.

It belongs to the ligand-gated ion channel (TC 1.A.9) family. Gamma-aminobutyric acid receptor (TC 1.A.9.5) subfamily. GABRG2 sub-subfamily. Heteropentamer, formed by a combination of alpha (GABRA1-6), beta (GABRB1-3), gamma (GABRG1-3), delta (GABRD), epsilon (GABRE), rho (GABRR1-3), pi (GABRP) and theta (GABRQ) chains, each subunit exhibiting distinct physiological and pharmacological properties. Interacts with GABARAP. Interacts with KIF21B. Identified in a complex of 720 kDa composed of LHFPL4, NLGN2, GABRA1, GABRB2, GABRG2 and GABRB3. Interacts with LHFPL4. Interacts with SHISA7; interaction leads to the regulation of GABA(A) receptor trafficking, channel deactivation kinetics and pharmacology. Post-translationally, palmitoylated by ZDHHC3/GODZ; required for the accumulation of GABA(A) receptors at the postsynaptic membrane of inhibitory GABAergic synapses.

It localises to the postsynaptic cell membrane. The protein resides in the cell membrane. Its subcellular location is the cell projection. The protein localises to the dendrite. It is found in the cytoplasmic vesicle membrane. The enzyme catalyses chloride(in) = chloride(out). With respect to regulation, allosterically activated by benzodiazepines. Activated by pentobarbital. Potentiated by etomidate, propofol, pregnanolone. Inhibited by the antagonist bicuculline. Inhibited by zinc ions. Potentiated by histamine. In terms of biological role, gamma subunit of the heteropentameric ligand-gated chloride channel gated by gamma-aminobutyric acid (GABA), a major inhibitory neurotransmitter in the brain. GABA-gated chloride channels, also named GABA(A) receptors (GABAAR), consist of five subunits arranged around a central pore and contain GABA active binding site(s) located at the alpha and beta subunit interface(s). When activated by GABA, GABAARs selectively allow the flow of chloride anions across the cell membrane down their electrochemical gradient. Gamma-2/GABRG2-containing GABAARs are found at both synaptic and extrasynaptic sites. Chloride influx into the postsynaptic neuron following GABAAR opening decreases the neuron ability to generate a new action potential, thereby reducing nerve transmission. GABAARs containing alpha-1 and beta-2 or -3 subunits exhibit synaptogenic activity; the gamma-2 subunit being necessary but not sufficient to induce rapid synaptic contacts formation. Extrasynaptic gamma-2-containing receptors contribute to the tonic GABAergic inhibition. GABAARs function also as histamine receptor where histamine binds at the interface of two neighboring beta subunits and potentiates GABA response in a gamma-2 subunit-controlled manner. This chain is Gamma-aminobutyric acid receptor subunit gamma-2, found in Homo sapiens (Human).